Consider the following 321-residue polypeptide: L-carnitine dehydrogenase (321 aa).

7–12 (GTGVIG) lines the NAD(+) pocket.

The protein belongs to the 3-hydroxyacyl-CoA dehydrogenase family. L-carnitine dehydrogenase subfamily. As to quaternary structure, homodimer.

It localises to the cytoplasm. The enzyme catalyses carnitine + NAD(+) = 3-dehydrocarnitine + NADH + H(+). The protein operates within amine and polyamine metabolism; carnitine metabolism. Its function is as follows. Catalyzes the NAD(+)-dependent oxidation of L-carnitine to 3-dehydrocarnitine. The polypeptide is L-carnitine dehydrogenase (Staphylococcus epidermidis (strain ATCC 12228 / FDA PCI 1200)).